A 684-amino-acid chain; its full sequence is Glycine--tRNA ligase beta subunit (684 aa).

Belongs to the class-II aminoacyl-tRNA synthetase family. Tetramer of two alpha and two beta subunits.

Its subcellular location is the cytoplasm. The enzyme catalyses tRNA(Gly) + glycine + ATP = glycyl-tRNA(Gly) + AMP + diphosphate. This chain is Glycine--tRNA ligase beta subunit, found in Pseudomonas fluorescens (strain Pf0-1).